Here is a 331-residue protein sequence, read N- to C-terminus: Cathepsin 7 (331 aa).

A signal peptide spans Met1 to Ala17. A propeptide spans Ala18–Lys111 (activation peptide). A Nuclear localization signal motif is present at residues Lys33–Ala50. Asn72 carries N-linked (GlcNAc...) asparagine glycosylation. 3 cysteine pairs are disulfide-bonded: Cys133/Cys176, Cys167/Cys209, and Cys267/Cys320. Cys136 is a catalytic residue. Active-site residues include His274 and Asn298.

It belongs to the peptidase C1 family.

The protein localises to the endosome. Its subcellular location is the lysosome. It is found in the cytoplasm. It localises to the perinuclear region. The protein resides in the golgi apparatus. The protein localises to the nucleus. Its subcellular location is the secreted. It is found in the extracellular space. Involved in trophoblast cell proliferation and differentiation probably by affecting mitotic cell cycle progression. Proteolytic activity and nuclear localization are essential for its role in cell cycle progression. This is Cathepsin 7 (Cts7) from Rattus norvegicus (Rat).